A 288-amino-acid polypeptide reads, in one-letter code: Phenazine biosynthesis-like domain-containing protein (288 aa).

E46 is a catalytic residue.

This sequence belongs to the PhzF family. Interacts with UNRIP/MAWD.

The protein is Phenazine biosynthesis-like domain-containing protein (PBLD) of Homo sapiens (Human).